Consider the following 360-residue polypeptide: Probable dual-specificity RNA methyltransferase RlmN (360 aa).

E91 serves as the catalytic Proton acceptor. The Radical SAM core domain maps to 97–335; the sequence is QHYGQSVCVT…CVVRQEHGTD (239 aa). An intrachain disulfide couples C104 to C340. 3 residues coordinate [4Fe-4S] cluster: C111, C115, and C118. Residues 163-164, S195, 218-220, and N296 contribute to the S-adenosyl-L-methionine site; these read GE and SLH. The active-site S-methylcysteine intermediate is C340.

Belongs to the radical SAM superfamily. RlmN family. It depends on [4Fe-4S] cluster as a cofactor.

Its subcellular location is the cytoplasm. The enzyme catalyses adenosine(2503) in 23S rRNA + 2 reduced [2Fe-2S]-[ferredoxin] + 2 S-adenosyl-L-methionine = 2-methyladenosine(2503) in 23S rRNA + 5'-deoxyadenosine + L-methionine + 2 oxidized [2Fe-2S]-[ferredoxin] + S-adenosyl-L-homocysteine. It carries out the reaction adenosine(37) in tRNA + 2 reduced [2Fe-2S]-[ferredoxin] + 2 S-adenosyl-L-methionine = 2-methyladenosine(37) in tRNA + 5'-deoxyadenosine + L-methionine + 2 oxidized [2Fe-2S]-[ferredoxin] + S-adenosyl-L-homocysteine. In terms of biological role, specifically methylates position 2 of adenine 2503 in 23S rRNA and position 2 of adenine 37 in tRNAs. This Streptococcus equi subsp. zooepidemicus (strain H70) protein is Probable dual-specificity RNA methyltransferase RlmN.